Reading from the N-terminus, the 709-residue chain is Potassium-transporting ATPase ATP-binding subunit (709 aa).

The next 4 helical transmembrane spans lie at 55-75 (VMLV…RDLA), 86-106 (GLVA…EAMA), 236-256 (IALN…VVTL), and 269-289 (VVVL…ALLS). The active-site 4-aspartylphosphate intermediate is the Asp324. Residues Asp361, Glu365, 395–402 (FTAETRMS), and Lys417 contribute to the ATP site. Mg(2+)-binding residues include Asp545 and Asp549. 3 helical membrane passes run 615-635 (FAII…LNVM), 643-663 (AILS…PLAL), and 688-708 (GLVV…ALGV).

This sequence belongs to the cation transport ATPase (P-type) (TC 3.A.3) family. Type IA subfamily. In terms of assembly, the system is composed of three essential subunits: KdpA, KdpB and KdpC.

The protein resides in the cell membrane. The catalysed reaction is K(+)(out) + ATP + H2O = K(+)(in) + ADP + phosphate + H(+). Its function is as follows. Part of the high-affinity ATP-driven potassium transport (or Kdp) system, which catalyzes the hydrolysis of ATP coupled with the electrogenic transport of potassium into the cytoplasm. This subunit is responsible for energy coupling to the transport system and for the release of the potassium ions to the cytoplasm. The chain is Potassium-transporting ATPase ATP-binding subunit from Mycobacterium tuberculosis (strain ATCC 25618 / H37Rv).